The chain runs to 140 residues: Relaxin-3 (140 aa).

The signal sequence occupies residues 1–26; sequence MAKRPLLLLLLAVWVLAGELWLRTEA. 3 disulfide bridges follow: C36/C127, C48/C140, and C126/C131. Residues 56 to 116 constitute a propeptide, connecting peptide; the sequence is SDMLAHEALG…RTPGALRGSR (61 aa).

Belongs to the insulin family. In terms of assembly, heterodimer of a B chain and an A chain linked by two disulfide bonds.

The protein resides in the secreted. Its function is as follows. May play a role in neuropeptide signaling processes. Ligand for LGR7, RXFP3 and RXFP4. The protein is Relaxin-3 (RLN3) of Sus scrofa (Pig).